The sequence spans 188 residues: Elongation factor P (188 aa).

It belongs to the elongation factor P family.

It is found in the cytoplasm. It functions in the pathway protein biosynthesis; polypeptide chain elongation. Functionally, involved in peptide bond synthesis. Stimulates efficient translation and peptide-bond synthesis on native or reconstituted 70S ribosomes in vitro. Probably functions indirectly by altering the affinity of the ribosome for aminoacyl-tRNA, thus increasing their reactivity as acceptors for peptidyl transferase. This is Elongation factor P from Rickettsia peacockii (strain Rustic).